The sequence spans 404 residues: Glucose-1-phosphate adenylyltransferase (404 aa).

Residues tyrosine 99, glycine 164, 179 to 180, and serine 197 each bind alpha-D-glucose 1-phosphate; that span reads EK.

The protein belongs to the bacterial/plant glucose-1-phosphate adenylyltransferase family.

The enzyme catalyses alpha-D-glucose 1-phosphate + ATP + H(+) = ADP-alpha-D-glucose + diphosphate. The protein operates within capsule biogenesis; capsule polysaccharide biosynthesis. It functions in the pathway glycan biosynthesis; glycogen biosynthesis. Functionally, involved in the biosynthesis of ADP-glucose, a building block, required in the biosynthesis of maltose-1-phosphate (M1P) and in the elongation reactions to produce linear alpha-1,4-glucans. Catalyzes the reaction between ATP and alpha-D-glucose 1-phosphate (G1P) to produce pyrophosphate and ADP-Glc. The sequence is that of Glucose-1-phosphate adenylyltransferase from Mycobacteroides abscessus (strain ATCC 19977 / DSM 44196 / CCUG 20993 / CIP 104536 / JCM 13569 / NCTC 13031 / TMC 1543 / L948) (Mycobacterium abscessus).